The sequence spans 30 residues: Snaclec coagulation factor IX/factor X-binding protein subunit B (30 aa).

A disulfide bridge links cysteine 2 with cysteine 13. The C-type lectin domain occupies 9–30; it reads YEGHCYRVFTEPQNWADAEKFC.

It belongs to the snaclec family. Heterodimer of subunits A and B; disulfide-linked. In terms of processing, glycosylated. As to expression, expressed by the venom gland.

Its subcellular location is the secreted. In terms of biological role, anticoagulant protein which binds to the gamma-carboxyglutamic acid-domain regions of factors IX (F9) and factor X (F10) in the presence of calcium with a 1 to 1 stoichiometry. The chain is Snaclec coagulation factor IX/factor X-binding protein subunit B from Bothrops jararaca (Jararaca).